A 180-amino-acid polypeptide reads, in one-letter code: FMN reductase (NADH) RutF (180 aa).

This sequence belongs to the non-flavoprotein flavin reductase family. RutF subfamily.

The catalysed reaction is FMNH2 + NAD(+) = FMN + NADH + 2 H(+). In terms of biological role, catalyzes the reduction of FMN to FMNH2 which is used to reduce pyrimidine by RutA via the Rut pathway. The polypeptide is FMN reductase (NADH) RutF (Variovorax paradoxus (strain S110)).